The sequence spans 895 residues: Protein translocase subunit SecA (895 aa).

Residues Q86, 104 to 108 (GEGKT), and D494 each bind ATP. 2 stretches are compositionally biased toward low complexity: residues 838–849 (AAATPPGFGAPP) and 870–882 (GDAAATDADTGNR). The segment at 838 to 895 (AAATPPGFGAPPVRQQLQYSAPTAEGDVEVHAGDAAATDADTGNRAQRRANQRQQREV) is disordered.

This sequence belongs to the SecA family. In terms of assembly, monomer and homodimer. Part of the essential Sec protein translocation apparatus which comprises SecA, SecYEG and auxiliary proteins SecDF. Other proteins may also be involved.

It is found in the cell membrane. Its subcellular location is the cytoplasm. The catalysed reaction is ATP + H2O + cellular proteinSide 1 = ADP + phosphate + cellular proteinSide 2.. Part of the Sec protein translocase complex. Interacts with the SecYEG preprotein conducting channel. Has a central role in coupling the hydrolysis of ATP to the transfer of proteins into and across the cell membrane, serving as an ATP-driven molecular motor driving the stepwise translocation of polypeptide chains across the membrane. This Kineococcus radiotolerans (strain ATCC BAA-149 / DSM 14245 / SRS30216) protein is Protein translocase subunit SecA.